We begin with the raw amino-acid sequence, 340 residues long: Outer membrane protein U (340 aa).

Residues 1-21 (MKKTLIALSVSAAAVATGVNA) form the signal peptide.

It belongs to the Gram-negative porin family. In terms of assembly, homotrimer.

It localises to the cell outer membrane. Forms pores that allow passive diffusion of small molecules across the outer membrane. This is Outer membrane protein U (ompU) from Vibrio vulnificus (strain CMCP6).